The primary structure comprises 750 residues: K(+)-insensitive pyrophosphate-energized proton pump (750 aa).

A run of 5 helical transmembrane segments spans residues 1–21 (MYGL…YQGI), 51–71 (FIII…GGLN), 78–98 (VVFI…VAWF), 133–153 (IGML…LFIP), and 161–181 (FIGF…AGGI). Substrate is bound at residue Lys-184. Mg(2+)-binding residues include Asp-187, Asp-191, and Asp-216. Transmembrane regions (helical) follow at residues 227–247 (DGFE…LLAI), 257–277 (LVWI…SYWV), 301–321 (LVWL…YMLI), 327–347 (GTMW…GALI), 391–411 (WMGL…TLGL), and 420–440 (VFAF…TIAV). Mg(2+) is bound at residue Asp-448. 4 helical membrane-spanning segments follow: residues 503-523 (VLIG…IMIL), 538-558 (ILWP…YWFT), 607-627 (GMIN…CLES), and 629-649 (LFIG…IFMA). Ca(2+) is bound by residues Asp-656, Asp-681, and Asp-685. Residue Lys-688 participates in substrate binding. The next 2 membrane-spanning stretches (helical) occupy residues 694 to 714 (ALNP…ELAI) and 716 to 736 (LPTT…LVFV).

The protein belongs to the H(+)-translocating pyrophosphatase (TC 3.A.10) family. K(+)-insensitive subfamily. In terms of assembly, homodimer. Mg(2+) serves as cofactor.

Its subcellular location is the cell inner membrane. It carries out the reaction diphosphate + H2O + H(+)(in) = 2 phosphate + 2 H(+)(out). Its function is as follows. Proton pump that utilizes the energy of pyrophosphate hydrolysis as the driving force for proton movement across the membrane. Generates a proton motive force. The sequence is that of K(+)-insensitive pyrophosphate-energized proton pump from Chlorobaculum tepidum (strain ATCC 49652 / DSM 12025 / NBRC 103806 / TLS) (Chlorobium tepidum).